Consider the following 430-residue polypeptide: Divergent protein kinase domain 2A (430 aa).

The N-terminal stretch at 1-35 (MWRLVPLKLGRLSRALKLAALGSLLVLMLLHSPSL) is a signal peptide.

The protein belongs to the DIPK family. As to expression, expressed in heart, brain, liver, spleen, kidney, lung, thymus, testis, ovary and muscle.

The protein localises to the golgi apparatus. It is found in the cytoplasmic vesicle. Its subcellular location is the COPI-coated vesicle. The protein resides in the secreted. In terms of biological role, may play a role in cardiomyocyte proliferation through paracrine signaling and activation of the PI3-kinase signaling cascade. The chain is Divergent protein kinase domain 2A (Dipk2a) from Mus musculus (Mouse).